We begin with the raw amino-acid sequence, 902 residues long: Respiratory burst oxidase homolog protein A (902 aa).

The Cytoplasmic portion of the chain corresponds to Met1–Arg344. Disordered stretches follow at residues Lys63–Arg87 and Ala107–Lys130. Polar residues predominate over residues Tyr74–Arg87. Positions Ala107 to Arg116 are enriched in low complexity. 2 EF-hand-like regions span residues Thr163 to Ser173 and Glu198 to Glu209. EF-hand domains follow at residues Asp221–Ala256 and Gln265–Gln300. Ca(2+) is bound by residues Asp234, Asp236, Asp238, Arg240, and Glu245. Phosphoserine occurs at positions 311 and 315. The chain crosses the membrane as a helical span at residues Val345–Glu365. Over Tyr366 to Cys380 the chain is Extracellular. The helical transmembrane segment at Ile381–Cys401 threads the bilayer. The 158-residue stretch at Lys383–Val540 folds into the Ferric oxidoreductase domain. Over Arg402 to Lys428 the chain is Cytoplasmic. The chain crosses the membrane as a helical span at residues Val429–Asp449. Residues Phe450 to Gly484 are Extracellular-facing. A helical transmembrane segment spans residues Val485–Phe505. The Cytoplasmic portion of the chain corresponds to Arg506–His529. Residues His530–Ile550 form a helical membrane-spanning segment. The Extracellular segment spans residues Glu551 to Val709. Positions Ile575–Asp703 constitute an FAD-binding FR-type domain. A helical transmembrane segment spans residues Val710–Ile730. Over Asn731–Phe902 the chain is Cytoplasmic. Residues Glu738–Lys760 are disordered.

Belongs to the RBOH (TC 5.B.1.3) family. Monomer and homodimer.

The protein resides in the membrane. In terms of biological role, calcium-dependent NADPH oxidase that generates superoxide. This chain is Respiratory burst oxidase homolog protein A (RBOHA), found in Arabidopsis thaliana (Mouse-ear cress).